A 644-amino-acid polypeptide reads, in one-letter code: MAKNLILWLVIAVVLMSVFQSFGPSESNGRKVDYSTFLQEVNNDQVREARINGREINVTKKDSNRYTTYIPVQDPKLLDNLLTKNVKVVGEPPEEPSLLASIFISWFPMLLLIGVWIFFMRQMQGGGGKGAMSFGKSKARMLTEDQIKTTFADVAGCDEAKEEVAELVEYLREPSRFQKLGGKIPKGVLMVGPPGTGKTLLAKAIAGEAKVPFFTISGSDFVEMFVGVGASRVRDMFEQAKKAAPCIIFIDEIDAVGRQRGAGLGGGHDEREQTLNQMLVEMDGFEGNEGIIVIAATNRPDVLDPALLRPGRFDRQVVVGLPDVRGREQILKVHMRRVPLAPDIDAAIIARGTPGFSGADLANLVNEAALFAARGNKRVVSMVEFEKAKDKIMMGAERRSMVMTEAQKESTAYHEAGHAIIGRLVPEHDPVHKVTIIPRGRALGVTFFLPEGDAISASRQKLESQISTLYGGRLAEEIIYGPEHVSTGASNDIKVATNLARNMVTQWGFSEKLGPLLYAEEEGEVFLGRSVAKAKHMSDETARIIDQEVKALIERNYNRARQLLTDNMDILHAMKDALMKYETIDAPQIDDLMARRDVRPPAGWEEPGASNNSGDNGSPKAPRPVDEPRTPNPGNTMSEQLGDK.

Topologically, residues methionine 1–asparagine 4 are cytoplasmic. Residues leucine 5–serine 25 traverse the membrane as a helical segment. The Periplasmic segment spans residues glutamate 26–leucine 98. Residues leucine 99–phenylalanine 119 form a helical membrane-spanning segment. Over methionine 120–lysine 644 the chain is Cytoplasmic. Residue glycine 192–threonine 199 coordinates ATP. A Zn(2+)-binding site is contributed by histidine 414. Residue glutamate 415 is part of the active site. Zn(2+) contacts are provided by histidine 418 and aspartate 492. Positions valine 598 to lysine 644 are disordered. Polar residues predominate over residues asparagine 632 to lysine 644.

It in the central section; belongs to the AAA ATPase family. The protein in the C-terminal section; belongs to the peptidase M41 family. As to quaternary structure, homohexamer. The cofactor is Zn(2+).

The protein localises to the cell inner membrane. Its function is as follows. Acts as a processive, ATP-dependent zinc metallopeptidase for both cytoplasmic and membrane proteins. Plays a role in the quality control of integral membrane proteins. In Shigella flexneri, this protein is ATP-dependent zinc metalloprotease FtsH.